The following is a 295-amino-acid chain: Histamine N-methyltransferase (295 aa).

Residue glutamate 28 participates in substrate binding. The S-adenosyl-L-methionine site is built by glycine 60, glutamate 89, glutamine 94, serine 120, and isoleucine 143. Residue asparagine 284 participates in substrate binding.

It belongs to the class I-like SAM-binding methyltransferase superfamily. HNMT family. Monomer.

It is found in the cytoplasm. The enzyme catalyses histamine + S-adenosyl-L-methionine = N(tau)-methylhistamine + S-adenosyl-L-homocysteine + H(+). Inactivates histamine by N-methylation. Plays an important role in degrading histamine and in regulating the airway response to histamine. In Mus musculus (Mouse), this protein is Histamine N-methyltransferase (Hnmt).